The primary structure comprises 576 residues: Immunoglobulin mu heavy chain (576 aa).

Gln1 bears the Pyrrolidone carboxylic acid mark. 5 consecutive Ig-like domains span residues 1–97, 132–212, 236–334, 352–442, and 452–553; these read QVTL…TYYC, PTLF…EHVC, PKVS…QNAS, PSFA…QTIS, and PDVY…RTVD. The variable (V) domain, involved in antigen recognition stretch occupies residues 1-124; sequence QVTLTESGPA…VWGKGTTVTV (124 aa). Disulfide bonds link Cys22/Cys97, Cys153/Cys212, and Cys259/Cys320. Asn74 and Asn170 each carry an N-linked (GlcNAc...) asparagine glycan. The interval 125 to 576 is constant (C) domain; that stretch reads SSGSASAPTL…VMSDTAGTCY (452 aa). N-linked (GlcNAc...) asparagine glycans are attached at residues Asn332, Asn395, and Asn402. Disulfide bonds link Cys367–Cys426 and Cys474–Cys536. Asn563 carries an N-linked (GlcNAc...) asparagine glycan.

Immunoglobulins are composed of two identical heavy chains and two identical light chains; disulfide-linked. It is found almost exclusively as a homopentamer in the serum. Membrane-bound IgM molecules are non-covalently associated with heterodimer of CD79A and CD79B.

It localises to the secreted. Its subcellular location is the cell membrane. Functionally, immunoglobulins, also known as antibodies, are membrane-bound or secreted glycoproteins produced by B lymphocytes. In the recognition phase of humoral immunity, the membrane-bound immunoglobulins serve as receptors which, upon binding of a specific antigen, trigger the clonal expansion and differentiation of B lymphocytes into immunoglobulins-secreting plasma cells. Secreted immunoglobulins mediate the effector phase of humoral immunity, which results in the elimination of bound antigens. The antigen binding site is formed by the variable domain of one heavy chain, together with that of its associated light chain. Thus, each immunoglobulin has two antigen binding sites with remarkable affinity for a particular antigen. The variable domains are assembled by a process called V-(D)-J rearrangement and can then be subjected to somatic hypermutations which, after exposure to antigen and selection, allow affinity maturation for a particular antigen. IgM antibodies play an important role in primary defense mechanisms. They have been shown to be involved in early recognition of external invaders like bacteria and viruses, cellular waste and modified self, as well as in recognition and elimination of precancerous and cancerous lesions. The membrane-bound form is found in the majority of normal B cells alongside with IgD. Membrane-bound IgM induces the phosphorylation of CD79A and CD79B by the Src family of protein tyrosine kinases. It may cause death of cells by apoptosis. It is also found in soluble form, which represents about 30% of the total serum immunoglobulins where it is found almost exclusively as a homopentamer. After the antigen binds to the B cell receptor, the secreted form is secreted in large amounts (, PubMed:16895553). The polypeptide is Immunoglobulin mu heavy chain (Homo sapiens (Human)).